Reading from the N-terminus, the 67-residue chain is Putative sodium channel alpha-toxin Acra5 (67 aa).

Residues 2 to 65 (RDGYIMIKDT…VYGDRGVICR (64 aa)) form the LCN-type CS-alpha/beta domain. 4 disulfides stabilise this stretch: Cys-13-Cys-64, Cys-17-Cys-40, Cys-26-Cys-45, and Cys-30-Cys-47. Arg-67 is a propeptide (removed by a carboxypeptidase).

This sequence belongs to the long (4 C-C) scorpion toxin superfamily. Sodium channel inhibitor family. Alpha subfamily. As to expression, expressed by the venom gland.

The protein resides in the secreted. Functionally, alpha toxins bind voltage-independently at site-3 of sodium channels (Nav) and inhibit the inactivation of the activated channels, thereby blocking neuronal transmission. This Androctonus crassicauda (Arabian fat-tailed scorpion) protein is Putative sodium channel alpha-toxin Acra5.